A 457-amino-acid polypeptide reads, in one-letter code: MNCCICQFSVRVPKDIHTDTVGHPPVLISELVLQCTRGTNYVLTEESSTICKKCCEKLARYHKSIQIARKLRGEILELIHSPYMSKDHKQTSYKEDDLDRETTISKFDGNIEEAQQQDEEEQELESVGTTVTLVGPAGIVEEVAEEEHTFIIKQSEEEDEFHSVDLELDIDNEIIINEEEAHEVEEVAHEIEEVAHEIEEEDLLPHDKQEAQEEDFFKEDTMSDFDEHLDGAIEYIISDGEDQEQDNESSGEYTVNIQCPSCPEKFSSRRAYNVHTKREHFPGYVCDQCGKTLQSYSGFIGHLQNHEPVKQFACPVCPERFSRKFRLKHHMAWHSGETPYQCDVCSKRFVHKVALYKHKMIHDSETKRLECQVCGFKTRTKAHLERHMRSHTGDKPFACPVCNKRFSQMYNMKAHLREHESPGTNRHRRFHCSKCTHTFINEQNYDAHVQRDDCTPV.

Positions 3-84 (CCICQFSVRV…ILELIHSPYM (82 aa)) constitute a ZAD domain. C2H2-type zinc fingers lie at residues 257–280 (IQCPSCPEKFSSRRAYNVHTKREH), 284–306 (YVCDQCGKTLQSYSGFIGHLQNH), 312–334 (FACPVCPERFSRKFRLKHHMAWH), 340–362 (YQCDVCSKRFVHKVALYKHKMIH), 369–391 (LECQVCGFKTRTKAHLERHMRSH), and 397–419 (FACPVCNKRFSQMYNMKAHLREH). The C2H2-type 7; degenerate zinc finger occupies 430–448 (FHCSKCTHTFINEQNYDAH).

As to quaternary structure, interacts (via region between the ZAD domain and the first zinc finger domain) with Cp190 (via centrosomal targeting M domain); the interaction is direct. Interacts with pita.

Its subcellular location is the nucleus. It localises to the chromosome. In terms of biological role, insulator DNA-binding protein. Recruits Cp190 and cooperatively binds to chromatin promoter regions to exert transcriptional regulator and chromatin insulator functions. Chromatin insulators are regulatory elements that establish independent domains of transcriptional activity within eukaryotic genomes. Insulators are proposed to structure the chromatin fiber into independent domains of differing transcriptional potential by promoting the formation of distinct chromatin loops to form topologically associating domains (TADs). Chromatin binding sites often cluster with those of other insulator DNA-binding proteins such as pita, CTCF and BEAF-32, but not Su(Hw). The protein is Zinc finger protein ZIPIC of Drosophila melanogaster (Fruit fly).